We begin with the raw amino-acid sequence, 194 residues long: MEDAAAPNSGSEFNPGARRGKSIDECQDMIRRSFRNPIVKFLMEQMEKSGCRVGDNFVKAVVCTGPVAGGYTKGRGITVCSNYLTIQDEVNQVVIHELIHAYDECRAKNLDWTNCAHHACSEIRAGHLSGDCHFKRELLRGFIKLRGHEQECIKRRVLKSLRGNPYCSEVAAKDAMEAVWDTCYNDTKPFDRAP.

A disordered region spans residues Met1 to Gly20. His96 lines the Zn(2+) pocket. Glu97 is an active-site residue. His100 is a Zn(2+) binding site.

This sequence belongs to the peptidase M76 family.

Its subcellular location is the mitochondrion inner membrane. Its function is as follows. Has a dual role in the assembly of mitochondrial ATPase. Acts as a protease that removes the N-terminal 10 residues of mitochondrial ATPase CF(0) subunit 6 (ATP6) at the intermembrane space side. Also involved in the correct assembly of the membrane-embedded ATPase CF(0) particle, probably mediating association of ATP6 with the subunit 9 ring. This chain is Mitochondrial inner membrane protease ATP23, found in Arabidopsis thaliana (Mouse-ear cress).